The chain runs to 173 residues: Dual-action ribosomal maturation protein DarP (173 aa).

Belongs to the DarP family.

It is found in the cytoplasm. In terms of biological role, member of a network of 50S ribosomal subunit biogenesis factors which assembles along the 30S-50S interface, preventing incorrect 23S rRNA structures from forming. Promotes peptidyl transferase center (PTC) maturation. This Pseudomonas entomophila (strain L48) protein is Dual-action ribosomal maturation protein DarP.